We begin with the raw amino-acid sequence, 726 residues long: Catalase-peroxidase (726 aa).

The segment at 1 to 33 (MSTSDDIHNTTATGKCPFHQGGHDQSAGAGTTT) is disordered. The segment at residues 105-226 (WHGAGTYRSI…LGATEMGLIY (122 aa)) is a cross-link (tryptophyl-tyrosyl-methioninium (Trp-Tyr) (with M-252)). His-106 (proton acceptor) is an active-site residue. Residues 226–252 (YVNPEGPDHSGEPLSAAAAIRATFGNM) constitute a cross-link (tryptophyl-tyrosyl-methioninium (Tyr-Met) (with W-105)). Position 267 (His-267) interacts with heme b.

The protein belongs to the peroxidase family. Peroxidase/catalase subfamily. Homodimer or homotetramer. Requires heme b as cofactor. Post-translationally, formation of the three residue Trp-Tyr-Met cross-link is important for the catalase, but not the peroxidase activity of the enzyme.

It catalyses the reaction H2O2 + AH2 = A + 2 H2O. The catalysed reaction is 2 H2O2 = O2 + 2 H2O. Its function is as follows. Bifunctional enzyme with both catalase and broad-spectrum peroxidase activity. In Shigella boydii serotype 4 (strain Sb227), this protein is Catalase-peroxidase.